A 210-amino-acid chain; its full sequence is S-norcoclaurine synthase (210 aa).

The first 19 residues, 1–19 (MMKMEVVFVFLMLLGTINC), serve as a signal peptide directing secretion. 108-110 (YKE) is a dopamine binding site. Lys122 (proton donor) is an active-site residue. Asp141 serves as a coordination point for (4-hydroxyphenyl)acetaldehyde.

This sequence belongs to the BetVI family. In terms of assembly, concentration-dependent dimerization, but mainly monomeric at concentrations around 10 uM. In terms of tissue distribution, expressed most abundantly in the rhizomes and to a lesser extent in petioles, roots, leaves and flower buds.

The catalysed reaction is (4-hydroxyphenyl)acetaldehyde + dopamine = (S)-norcoclaurine + H2O. Functionally, involved in the biosynthesis of the common precursor of all benzylisoquinoline alkaloids such as morphine, sanguinarine, codeine or berberine. Condenses dopamine and 4-hydroxyphenylacetaldehyde. In Thalictrum flavum subsp. glaucum (Yellow meadow rue), this protein is S-norcoclaurine synthase.